The primary structure comprises 86 residues: Small ribosomal subunit protein bS18 (86 aa).

Belongs to the bacterial ribosomal protein bS18 family. In terms of assembly, part of the 30S ribosomal subunit. Forms a tight heterodimer with protein bS6.

Binds as a heterodimer with protein bS6 to the central domain of the 16S rRNA, where it helps stabilize the platform of the 30S subunit. The sequence is that of Small ribosomal subunit protein bS18 from Campylobacter lari (strain RM2100 / D67 / ATCC BAA-1060).